Reading from the N-terminus, the 249-residue chain is Pulmonary surfactant-associated protein A (249 aa).

Residues 1 to 20 form the signal peptide; the sequence is MLRWPLALTFLLLAVSGLEC. One can recognise a Collagen-like domain in the interval 28-100; the sequence is ASPGIPGTPG…PGERGPPGLP (73 aa). The segment at 29-102 is disordered; it reads SPGIPGTPGS…ERGPPGLPAH (74 aa). Residues Pro-30, Pro-33, Pro-36, Pro-42, Pro-54, Pro-57, Pro-63, and Pro-70 each carry the 4-hydroxyproline modification. The segment covering 42–51 has biased composition (basic and acidic residues); it reads PGRDGRDGIK. Positions 84–93 are enriched in basic and acidic residues; it reads ERGEKGEPGE. The 117-residue stretch at 133-249 folds into the C-type lectin domain; sequence AVGEKVFSTN…QQYRLAICEF (117 aa). 2 disulfides stabilise this stretch: Cys-155-Cys-247 and Cys-225-Cys-239. An N-linked (GlcNAc...) asparagine glycan is attached at Asn-208. Ca(2+) is bound by residues Glu-216, Arg-218, Asn-235, and Asp-236.

This sequence belongs to the SFTPA family. Oligomeric complex of 6 set of homotrimers.

It localises to the secreted. The protein localises to the extracellular space. The protein resides in the extracellular matrix. It is found in the surface film. In presence of calcium ions, it binds to surfactant phospholipids and contributes to lower the surface tension at the air-liquid interface in the alveoli of the mammalian lung and is essential for normal respiration. Enhances the expression of MYO18A/SP-R210 on alveolar macrophages. This is Pulmonary surfactant-associated protein A (SFTPA1) from Sus scrofa (Pig).